The chain runs to 257 residues: Small ribosomal subunit protein uS2 (257 aa).

Belongs to the universal ribosomal protein uS2 family.

The sequence is that of Small ribosomal subunit protein uS2 from Bartonella quintana (strain Toulouse) (Rochalimaea quintana).